A 475-amino-acid chain; its full sequence is MTPSAKRRTLNTHYFMPPHVRVVELMTSGNTAPEIMSLLVDRMKTVGLKPFVAKRESTGFIQNRVWASIKREMLHVVAEGIVDAQTADDIFVETIVRPGTRPFAAMDYVGLDTVANIERTYAQERHLDTTYTVDYLQREFIDVGKLGIKSNKGGFYPPSTAADAVSTKPRIFVLDNGLSGQIDNLKQGKILEYSFEGEYIRTVFKDQYLPDGIAVSQEENVLFWTCMGSPGQKDGMIYAGKLDGNDIRPLIQQGIVHTPKQIVIDEANKKLYFTDREGLCIWRCDKDGSNLEQVVVTGDNNNECDRRDATRWCVGITFSHTLGKIFWTQKGASKGWQGRIFSANMTIPPGETAAHRKDKVCLLEGLAEPIDLDFHESTKTLYWTDRGEMPFGNTLNRLRFDDRGYALHTDSTPHLKHEIIARKFHEAIGLKIDARNEHVYVADLGGSICRCKLDGSDKVRLVFQEDRAWTGVALA.

Residue G99 to A104 coordinates NAD(+). K149 contributes to the CoA binding site. N245 contacts NAD(+).

It belongs to the 3-hydroxyacyl-CoA dehydrogenase family.

Its pathway is mycotoxin biosynthesis. In terms of biological role, 3-hydroxyacyl-CoA dehydrogenase-like protein; part of the Tox1A locus, one of the 2 loci that mediate the biosynthesis of T-toxin, a family of linear polyketides 37 to 45 carbons in length, of which the major component is 41 carbons, and which leads to high virulence to maize. One of the PKSs (PKS1 or PKS2) could synthesize a precursor, used subsequently by the other PKS as starter unit, to add additional carbons. Variability in the length of the final carbon backbone C35-47 could be achieved by varying the number of condensation cycles, or use of different starter or extender units or might be due to decarboxylation of the penultimate product, catalyzed by DEC1. Additional proteins are required for the biosynthesis of T-toxin, including oxidoreductases RED1, RED2, RED3, LAM1 and OXI1, as well as esterase TOX9. This Cochliobolus heterostrophus (strain C4 / ATCC 48331 / race T) (Southern corn leaf blight fungus) protein is 3-hydroxyacyl-CoA dehydrogenase-like protein LAM1.